We begin with the raw amino-acid sequence, 200 residues long: MTDNDGQKDFSEAAAENAGSKPGEPRVSKPYIMPDDPEETPSEALVKEAAEAKDRMLRTLAEMENLRKRTQREVADARAYGIAGFARDVLEIADNLQRALDAVPAEARAAADPGLTALIEGVELTERSLHRALEKNGVKKLDAAGEKFDPNIHQAMFEVPDNSVPPGTVVQVIQTGYMIGDRVLRPALVGVSKAEPKPAA.

The span at 1-11 (MTDNDGQKDFS) shows a compositional bias: basic and acidic residues. A disordered region spans residues 1-43 (MTDNDGQKDFSEAAAENAGSKPGEPRVSKPYIMPDDPEETPSE).

The protein belongs to the GrpE family. In terms of assembly, homodimer.

The protein resides in the cytoplasm. Functionally, participates actively in the response to hyperosmotic and heat shock by preventing the aggregation of stress-denatured proteins, in association with DnaK and GrpE. It is the nucleotide exchange factor for DnaK and may function as a thermosensor. Unfolded proteins bind initially to DnaJ; upon interaction with the DnaJ-bound protein, DnaK hydrolyzes its bound ATP, resulting in the formation of a stable complex. GrpE releases ADP from DnaK; ATP binding to DnaK triggers the release of the substrate protein, thus completing the reaction cycle. Several rounds of ATP-dependent interactions between DnaJ, DnaK and GrpE are required for fully efficient folding. The polypeptide is Protein GrpE (Afipia carboxidovorans (strain ATCC 49405 / DSM 1227 / KCTC 32145 / OM5) (Oligotropha carboxidovorans)).